The primary structure comprises 209 residues: U1 small nuclear ribonucleoprotein C (209 aa).

Residues 4-36 (HYCDYCDVFLTHDSASVRKAHNSGRNHLANVRD) form a Matrin-type zinc finger. A compositionally biased stretch (low complexity) spans 72–87 (PQHLQAPPQGGFAPPM). Positions 72–209 (PQHLQAPPQG…RARMMGPGGR (138 aa)) are disordered. Pro residues-rich tracts occupy residues 93 to 150 (GGFP…PFPP) and 159 to 191 (PGAP…PTNP).

The protein belongs to the U1 small nuclear ribonucleoprotein C family. In terms of assembly, U1 snRNP is composed of the 7 core Sm proteins B/B', D1, D2, D3, E, F and G that assemble in a heptameric protein ring on the Sm site of the small nuclear RNA to form the core snRNP, and at least 3 U1 snRNP-specific proteins U1-70K, U1-A and U1-C. U1-C interacts with U1 snRNA and the 5' splice-site region of the pre-mRNA.

The protein resides in the nucleus. Functionally, component of the spliceosomal U1 snRNP, which is essential for recognition of the pre-mRNA 5' splice-site and the subsequent assembly of the spliceosome. U1-C is directly involved in initial 5' splice-site recognition for both constitutive and regulated alternative splicing. The interaction with the 5' splice-site seems to precede base-pairing between the pre-mRNA and the U1 snRNA. Stimulates commitment or early (E) complex formation by stabilizing the base pairing of the 5' end of the U1 snRNA and the 5' splice-site region. The sequence is that of U1 small nuclear ribonucleoprotein C from Coprinopsis cinerea (strain Okayama-7 / 130 / ATCC MYA-4618 / FGSC 9003) (Inky cap fungus).